The chain runs to 195 residues: Thymidylate kinase (195 aa).

7 to 14 lines the ATP pocket; sequence GIDGVGKS.

Belongs to the thymidylate kinase family.

It carries out the reaction dTMP + ATP = dTDP + ADP. In terms of biological role, phosphorylation of dTMP to form dTDP in both de novo and salvage pathways of dTTP synthesis. This is Thymidylate kinase from Campylobacter hominis (strain ATCC BAA-381 / DSM 21671 / CCUG 45161 / LMG 19568 / NCTC 13146 / CH001A).